Consider the following 283-residue polypeptide: Cytosolic Fe-S cluster assembly factor CFD1 (283 aa).

Position 26–33 (26–33) interacts with ATP; that stretch reads GKGGVGKS. Residues cysteine 202 and cysteine 205 each contribute to the [4Fe-4S] cluster site.

It belongs to the Mrp/NBP35 ATP-binding proteins family. NUBP2/CFD1 subfamily. Heterotetramer of 2 NBP35 and 2 CFD1 chains. It depends on [4Fe-4S] cluster as a cofactor.

The protein localises to the cytoplasm. In terms of biological role, component of the cytosolic iron-sulfur (Fe/S) protein assembly (CIA) machinery. Required for maturation of extramitochondrial Fe-S proteins. The NBP35-CFD1 heterotetramer forms a Fe-S scaffold complex, mediating the de novo assembly of an Fe-S cluster and its transfer to target apoproteins. Required for biogenesis and export of both ribosomal subunits, which may reflect a role in assembly of the Fe/S clusters in RLI1, a protein which performs rRNA processing and ribosome export. This Kluyveromyces lactis (strain ATCC 8585 / CBS 2359 / DSM 70799 / NBRC 1267 / NRRL Y-1140 / WM37) (Yeast) protein is Cytosolic Fe-S cluster assembly factor CFD1.